We begin with the raw amino-acid sequence, 200 residues long: Somatotropin (200 aa).

Residues 1 to 22 (MARVLVVLSVVVASLFFSQGAT) form the signal peptide. Zn(2+) is bound at residue His38. Cys71 and Cys173 are joined by a disulfide. Glu182 is a Zn(2+) binding site. A disulfide bridge links Cys190 with Cys198.

The protein belongs to the somatotropin/prolactin family.

Its subcellular location is the secreted. Its function is as follows. Growth hormone plays an important role in growth control and is involved in the regulation of several anabolic processes. Implicated as an osmoregulatory substance important for seawater adaptation. The sequence is that of Somatotropin (gh) from Pangasianodon gigas (Mekong giant catfish).